The chain runs to 242 residues: Ribosomal RNA small subunit methyltransferase G (242 aa).

S-adenosyl-L-methionine-binding positions include Gly79, 130–131 (VE), and Gln149.

It belongs to the methyltransferase superfamily. RNA methyltransferase RsmG family.

It is found in the cytoplasm. Functionally, specifically methylates the N7 position of a guanine in 16S rRNA. The sequence is that of Ribosomal RNA small subunit methyltransferase G from Mycoplasmoides gallisepticum (strain R(low / passage 15 / clone 2)) (Mycoplasma gallisepticum).